The sequence spans 289 residues: Fumagillin beta-trans-bergamotene synthase af520 (289 aa).

The next 6 helical transmembrane spans lie at 35–55 (AVAL…GFLW), 95–115 (TLLY…TNTI), 142–162 (LIGA…FDGG), 165–185 (LHGL…TTGH), 222–242 (AWTI…LAYV), and 262–282 (YVSY…PIFP).

It belongs to the paxB family.

The protein localises to the membrane. It carries out the reaction (2E,6E)-farnesyl diphosphate = (+)-exo-beta-bergamotene + diphosphate. It participates in secondary metabolite biosynthesis; terpenoid biosynthesis. In terms of biological role, beta-trans-bergamotene synthase; part of the gene cluster that mediates the biosynthesis of fumagillin, a meroterpenoid that has numerous biological activities including irreversible inhibition of human type 2 methionine aminopeptidase (METAP2). Within the pathway, the membrane-bound fumagillin beta-trans-bergamotene synthase af520 converts farnesyl pyrophosphate (FPP) to beta-trans-bergamotene. The pathway begins with the conversion of FPP to beta-trans-bergamotene by af520. The multifunctional cytochrome P450 monooxygenase af510 then converts beta-trans-bergamotene into 5-keto-demethoxyfumagillol via several oxydation steps. 5-keto-demethoxyfumagillol is then subjected to successive C-6 hydroxylation and O-methylation by the dioxygenase af480 and O-methyltransferase af390-400, respectively, to yield 5-keto-fumagillol, which is then stereoselectively reduced by the keto-reductase af490 to 5R-hydroxy-seco-sesquiterpene. The next step is the polyketide transferase af380-catalyzed transfer of a dodecapentaenoyl group synthesized by the polyketide synthase af370 onto 5R-hydroxy-seco-sesquiterpene which leads to the production of prefumagillin. Finally, oxidative cleavage by the monooxygenase af470 converts prefumagillin to fumagillin. This chain is Fumagillin beta-trans-bergamotene synthase af520, found in Aspergillus fumigatus (strain ATCC MYA-4609 / CBS 101355 / FGSC A1100 / Af293) (Neosartorya fumigata).